The chain runs to 97 residues: UPF0416 protein RC0826 (97 aa).

The signal sequence occupies residues 1-33 (MRIFVKAAISTAAWRFYAHPTVAMGICVGTALA).

Belongs to the UPF0416 family.

The sequence is that of UPF0416 protein RC0826 from Rickettsia conorii (strain ATCC VR-613 / Malish 7).